The following is a 117-amino-acid chain: MTVQSNNKLASQVCEACHVDAPKVSDEELKELIGLIPDWVPQVRDNVMMLEREYKFKNYKLAWAFANKVSELAESEFHHPSILLEWGKVTVTWWTHSIGGLHKNDFICAAKTDQLGD.

It belongs to the pterin-4-alpha-carbinolamine dehydratase family.

It catalyses the reaction (4aS,6R)-4a-hydroxy-L-erythro-5,6,7,8-tetrahydrobiopterin = (6R)-L-erythro-6,7-dihydrobiopterin + H2O. The sequence is that of Putative pterin-4-alpha-carbinolamine dehydratase from Colwellia psychrerythraea (strain 34H / ATCC BAA-681) (Vibrio psychroerythus).